Reading from the N-terminus, the 557-residue chain is Hemolysin transporter protein ShlB (557 aa).

Residues 1–18 (MIKKITALTLLVSTALSA) form the signal peptide. The POTRA domain occupies 79–152 (LPIAGVYLQG…GELGLSVTEG (74 aa)).

The protein belongs to the TPS (TC 1.B.20) family.

It localises to the cell outer membrane. Functionally, interacts with the cell-bound hemolysin. Necessary for the extracellular secretion and activation of hemolysin. Member of a two partner secretion pathway (TPS) in which it mediates the secretion of hemolysin. The polypeptide is Hemolysin transporter protein ShlB (shlB) (Serratia marcescens).